Here is a 96-residue protein sequence, read N- to C-terminus: Co-chaperonin GroES (96 aa).

It belongs to the GroES chaperonin family. In terms of assembly, heptamer of 7 subunits arranged in a ring. Interacts with the chaperonin GroEL.

The protein localises to the cytoplasm. Its function is as follows. Together with the chaperonin GroEL, plays an essential role in assisting protein folding. The GroEL-GroES system forms a nano-cage that allows encapsulation of the non-native substrate proteins and provides a physical environment optimized to promote and accelerate protein folding. GroES binds to the apical surface of the GroEL ring, thereby capping the opening of the GroEL channel. In Nitrosomonas eutropha (strain DSM 101675 / C91 / Nm57), this protein is Co-chaperonin GroES.